A 53-amino-acid chain; its full sequence is Dihydrolipoyl dehydrogenase (53 aa).

FAD contacts are provided by residues 35–44 (EKYPTFGGTC) and lysine 53. Cysteines 44 and 49 form a disulfide.

The protein belongs to the class-I pyridine nucleotide-disulfide oxidoreductase family. In terms of assembly, homodimer. The cofactor is FAD.

It localises to the mitochondrion. It carries out the reaction N(6)-[(R)-dihydrolipoyl]-L-lysyl-[protein] + NAD(+) = N(6)-[(R)-lipoyl]-L-lysyl-[protein] + NADH + H(+). With respect to regulation, lipoamide reduction and the NADH -&gt; NAD reaction are both completely inhibited by copper and cadmium ions. Its function is as follows. Lipoamide dehydrogenase is a component of the glycine cleavage system as well as of the alpha-ketoacid dehydrogenase complexes. This enzyme has lipoamide dehydrogenase activity and NADH -&gt; NAD transhydrogenation activity. Also displays some NADH-ferricyanide reductase and NADPH -&gt; NAD transydrogenation activities. This Hymenolepis diminuta (Rat tapeworm) protein is Dihydrolipoyl dehydrogenase.